A 192-amino-acid chain; its full sequence is Ion-translocating oxidoreductase complex subunit B (192 aa).

Residues 1–26 (MNTIWIAVGALTFLGLVFGAILGYAS) form a hydrophobic region. The 4Fe-4S domain maps to 32–91 (EDDPVVEKIDAILPQSQCGQCGYPGCRPYAEAVGLQGEKINRCAPGGEAVMLKIADLLNV). [4Fe-4S] cluster-binding residues include cysteine 49, cysteine 52, cysteine 57, cysteine 74, cysteine 117, cysteine 120, cysteine 123, cysteine 127, cysteine 147, cysteine 150, cysteine 153, and cysteine 157. 4Fe-4S ferredoxin-type domains are found at residues 108-137 (MLAV…GATR) and 138-167 (AMHT…LRPV).

It belongs to the 4Fe4S bacterial-type ferredoxin family. RnfB subfamily. In terms of assembly, the complex is composed of six subunits: RsxA, RsxB, RsxC, RsxD, RsxE and RsxG. [4Fe-4S] cluster is required as a cofactor.

Its subcellular location is the cell inner membrane. Its function is as follows. Part of a membrane-bound complex that couples electron transfer with translocation of ions across the membrane. Required to maintain the reduced state of SoxR. The protein is Ion-translocating oxidoreductase complex subunit B of Salmonella arizonae (strain ATCC BAA-731 / CDC346-86 / RSK2980).